Reading from the N-terminus, the 588-residue chain is MAAHDDDMNRGIRPGRGSEDPAGQVAYLEQEIAVLRRKLAESPRHTRILEERIVELQTNLAGVSAQNERLAGTLREARDQIVALKEEVDRLAQPPAGFGVFLQANEDGTADIFTGGRKLRVNVSPSVELDELRRGQEVMLNEALNVVEAMEYESVGDIVTLKEILEDGERALVLGHTDEERVVRLAEPLRGLTIRPGDALLLEPRSGYVYEVVPKSEVEELVLEEVPDIGYEQIGGLGGQIEMIRDAVELPYLYPDLFREHELRPPKGVLLYGPPGCGKTLIAKAVANSLAKKVAEVTGQAAGKSFFLNIKGPELLNKYVGETERQIRLVFQRAREKASEGTPVIVFFDEMESLFRTRGSGVSSDVENTIVPQLLAEIDGVEGLQNVVVIGASNREDMIDPAILRPGRLDVKIKIERPDAEAAKDIFGKYLTERLPLHSDDLAEHEKDKSATVSSMIQTAVEQMYAESEENRFLEVTYANGDKEVLYFKDFNSGAMIENIVGRAKKMAIKDFLDKNQKGLRVSHLLQACVDEFKENEDLPNTTNPDDWARISGKKGERIVYIRTLVTGKQGADTGRSIDTVANTGQYL.

Residues 1 to 10 (MAAHDDDMNR) are compositionally biased toward basic and acidic residues. The disordered stretch occupies residues 1–23 (MAAHDDDMNRGIRPGRGSEDPAG). The stretch at 47–94 (RILEERIVELQTNLAGVSAQNERLAGTLREARDQIVALKEEVDRLAQP) forms a coiled coil. 276-281 (GCGKTL) serves as a coordination point for ATP. The docks into pockets in the proteasome alpha-ring stretch occupies residues 587 to 588 (YL).

This sequence belongs to the AAA ATPase family. Homohexamer. Assembles into a hexameric ring structure that caps the 20S proteasome core. Strongly interacts with the prokaryotic ubiquitin-like protein Pup through a hydrophobic interface; the interacting region of ARC lies in its N-terminal coiled-coil domain. There is one Pup binding site per ARC hexamer ring. Upon ATP-binding, the C-terminus of ARC interacts with the alpha-rings of the proteasome core, possibly by binding to the intersubunit pockets.

The protein operates within protein degradation; proteasomal Pup-dependent pathway. Its function is as follows. ATPase which is responsible for recognizing, binding, unfolding and translocation of pupylated proteins into the bacterial 20S proteasome core particle. May be essential for opening the gate of the 20S proteasome via an interaction with its C-terminus, thereby allowing substrate entry and access to the site of proteolysis. Thus, the C-termini of the proteasomal ATPase may function like a 'key in a lock' to induce gate opening and therefore regulate proteolysis. This Streptomyces coelicolor (strain ATCC BAA-471 / A3(2) / M145) protein is Proteasome-associated ATPase.